A 320-amino-acid chain; its full sequence is MQYAKISGTGSYLPANRVSNDDLAQKVDTSDEWITARTGIKFRHIAAENEKTSDLAAEAARRALDAAGLNGNEIDLIIVATATPDMQFPSTATIVQQKLGITNGCPAFDVQAVCAGFMYALTTANAYIKSGMAKNALVIGAETFSRIVDWNDRTTCVLFGDGAGAVVLSASDTPGIIHSKLKADGNYLKLLNVPGQIACGKVSGSPYISMDGPGVFKFAVKMLSKIADDVIEEAGYTAAQIDWIVPHQANRRIIESTAKHLGLSMDKVVLTVQDHGNTSAASIPLALDTGIRSGQIKRGQNLLLEGIGGGFAWGAVLLQY.

Catalysis depends on residues Cys-114 and His-247. Residues 248-252 are ACP-binding; it reads QANRR. Asn-277 is a catalytic residue.

Belongs to the thiolase-like superfamily. FabH family. As to quaternary structure, homodimer.

It localises to the cytoplasm. The enzyme catalyses malonyl-[ACP] + acetyl-CoA + H(+) = 3-oxobutanoyl-[ACP] + CO2 + CoA. Its pathway is lipid metabolism; fatty acid biosynthesis. Functionally, catalyzes the condensation reaction of fatty acid synthesis by the addition to an acyl acceptor of two carbons from malonyl-ACP. Catalyzes the first condensation reaction which initiates fatty acid synthesis and may therefore play a role in governing the total rate of fatty acid production. Possesses both acetoacetyl-ACP synthase and acetyl transacylase activities. Its substrate specificity determines the biosynthesis of branched-chain and/or straight-chain of fatty acids. This chain is Beta-ketoacyl-[acyl-carrier-protein] synthase III, found in Neisseria meningitidis serogroup A / serotype 4A (strain DSM 15465 / Z2491).